Consider the following 165-residue polypeptide: V-type proton ATPase 16 kDa proteolipid subunit (165 aa).

The Lumenal segment spans residues 1–10 (MSSTFSGDET). A helical transmembrane segment spans residues 11–33 (APFFGFLGAAAALVFSCMGAAYG). The Cytoplasmic segment spans residues 34–55 (TAKSGVGVASMGVMRPELVMKS). A helical transmembrane segment spans residues 56–76 (IVPVVMAGVLGIYGLIIAVII). At 77–95 (STGINPKAKSYYLFDGYAH) the chain is on the lumenal side. Residues 96 to 117 (LSSGLACGLAGLSAGMAIGIVG) traverse the membrane as a helical segment. At 118–129 (DAGVRANAQQPK) the chain is on the cytoplasmic side. Residues 130–155 (LFVGMILILIFAEALALYGLIVGIIL) traverse the membrane as a helical segment. Topologically, residues 156-165 (SSRAGQSRAD) are lumenal.

The protein belongs to the V-ATPase proteolipid subunit family. As to quaternary structure, V-ATPase is a heteromultimeric enzyme composed of a peripheral catalytic V1 complex (main components: subunits A, B, C, D, E, and F) attached to an integral membrane V0 proton pore complex (main component: the proteolipid protein; which is present as a hexamer that forms the proton-conducting pore). As to expression, higher expression in leaves, followed by roots and weakly in flowers. Expression in leaves is light-dependent.

The protein localises to the vacuole membrane. In terms of biological role, proton-conducting pore forming subunit of the membrane integral V0 complex of vacuolar ATPase. V-ATPase is responsible for acidifying a variety of intracellular compartments in eukaryotic cells. Necessary for the crassulacean acid metabolism. The sequence is that of V-type proton ATPase 16 kDa proteolipid subunit from Kalanchoe daigremontiana (Devil's backbone).